The primary structure comprises 353 residues: DNA polymerase IV (353 aa).

Residues 6–187 (IIHVDCDCFY…LPVSKLHGVG (182 aa)) enclose the UmuC domain. Mg(2+) contacts are provided by Asp10 and Asp105. Glu106 is a catalytic residue.

It belongs to the DNA polymerase type-Y family. As to quaternary structure, monomer. Mg(2+) serves as cofactor.

Its subcellular location is the cytoplasm. It carries out the reaction DNA(n) + a 2'-deoxyribonucleoside 5'-triphosphate = DNA(n+1) + diphosphate. Its function is as follows. Poorly processive, error-prone DNA polymerase involved in untargeted mutagenesis. Copies undamaged DNA at stalled replication forks, which arise in vivo from mismatched or misaligned primer ends. These misaligned primers can be extended by PolIV. Exhibits no 3'-5' exonuclease (proofreading) activity. May be involved in translesional synthesis, in conjunction with the beta clamp from PolIII. This chain is DNA polymerase IV, found in Pseudomonas fluorescens (strain Pf0-1).